Reading from the N-terminus, the 121-residue chain is Putative iron-sulfur cluster insertion protein ErpA (121 aa).

The iron-sulfur cluster site is built by cysteine 49, cysteine 113, and cysteine 115.

This sequence belongs to the HesB/IscA family. As to quaternary structure, homodimer. Iron-sulfur cluster serves as cofactor.

Functionally, required for insertion of 4Fe-4S clusters. The chain is Putative iron-sulfur cluster insertion protein ErpA from Paraburkholderia phymatum (strain DSM 17167 / CIP 108236 / LMG 21445 / STM815) (Burkholderia phymatum).